Reading from the N-terminus, the 200-residue chain is Imidazoleglycerol-phosphate dehydratase (200 aa).

It belongs to the imidazoleglycerol-phosphate dehydratase family.

It is found in the cytoplasm. The catalysed reaction is D-erythro-1-(imidazol-4-yl)glycerol 3-phosphate = 3-(imidazol-4-yl)-2-oxopropyl phosphate + H2O. Its pathway is amino-acid biosynthesis; L-histidine biosynthesis; L-histidine from 5-phospho-alpha-D-ribose 1-diphosphate: step 6/9. The protein is Imidazoleglycerol-phosphate dehydratase of Chlorobium luteolum (strain DSM 273 / BCRC 81028 / 2530) (Pelodictyon luteolum).